The primary structure comprises 136 residues: TBK1 inhibitor DP96R (136 aa).

Residues 66-86 are disordered; that stretch reads NNALEKPAGANNIPEKSAGRM.

It belongs to the asfivirus DP96R family.

Functionally, inhibits cGAS-STING-mediated type I IFN expression and NF-kB activation by inhibiting TBK1 and IKBKB/IKKB. Inhibits host TBK1 phosphorylation. The protein is TBK1 inhibitor DP96R of Ornithodoros (relapsing fever ticks).